The chain runs to 257 residues: Pantothenate synthetase (257 aa).

Met-29 to His-36 contacts ATP. The Proton donor role is filled by His-36. A (R)-pantoate-binding site is contributed by Gln-60. Gln-60 lines the beta-alanine pocket. Gly-145–Asp-148 serves as a coordination point for ATP. Position 151 (Gln-151) interacts with (R)-pantoate. ATP is bound by residues Val-174 and Leu-182–Arg-185.

It belongs to the pantothenate synthetase family. In terms of assembly, homodimer.

The protein localises to the cytoplasm. It carries out the reaction (R)-pantoate + beta-alanine + ATP = (R)-pantothenate + AMP + diphosphate + H(+). It participates in cofactor biosynthesis; (R)-pantothenate biosynthesis; (R)-pantothenate from (R)-pantoate and beta-alanine: step 1/1. Its function is as follows. Catalyzes the condensation of pantoate with beta-alanine in an ATP-dependent reaction via a pantoyl-adenylate intermediate. The chain is Pantothenate synthetase from Coxiella burnetii (strain Dugway 5J108-111).